The sequence spans 472 residues: Membrane-bound acylglycerophosphatidylinositol O-acyltransferase MBOAT7 (472 aa).

Residues 1–5 (MSPEE) lie on the Cytoplasmic side of the membrane. The helical transmembrane segment at 6–22 (WTYLVVLLISIPIGFLF) threads the bilayer. Residues 23–33 (KKAGPGLKRWG) are Lumenal-facing. Residues 34–57 (AAAVGLGLTLFTCGPHTLHSLVTI) form a helical membrane-spanning segment. The Cytoplasmic portion of the chain corresponds to 58–73 (LGTWALIQAQPCSCHA). Residues 74–93 (LALAWTFSYLLFFRALSLLG) traverse the membrane as a helical segment. Topologically, residues 94 to 194 (LPTPTPFTNA…VPSLRPLLRR (101 aa)) are lumenal. Residues 195–212 (AWPAPLFGLLFLLSSHLF) traverse the membrane as a helical segment. The Cytoplasmic portion of the chain corresponds to 213-231 (PLEAVREDAFYARPLPARL). The chain crosses the membrane as a helical span at residues 232 to 261 (FYMIPVFFAFRMRFYVAWIAAECGCIAAGF). Topologically, residues 262-426 (GAYPVAAKAR…LSLADTLRYW (165 aa)) are lumenal. Residue Asn321 is glycosylated (N-linked (GlcNAc...) asparagine). A helical transmembrane segment spans residues 427–447 (ASIYFCIHFLALAALGLGLAL). Over 448-472 (GGGSPSRRKAASQPTSLAPEKLREE) the chain is Cytoplasmic. The tract at residues 453-472 (SRRKAASQPTSLAPEKLREE) is disordered.

Belongs to the membrane-bound acyltransferase family. In terms of assembly, interacts with SPTSSA; the interaction facilitates MBOAT7 location to mitochondria-associated membranes (MAMs). As to expression, overexpressed in metastatic breast and bladder carcinomas relative to normal breast epithelium and urothelium.

It localises to the endoplasmic reticulum membrane. The enzyme catalyses a 1-acyl-sn-glycero-3-phospho-(1D-myo-inositol) + (5Z,8Z,11Z,14Z)-eicosatetraenoyl-CoA = a 1-acyl-2-(5Z,8Z,11Z,14Z-eicosatetraenoyl)-sn-glycero-3-phospho-(1D-myo-inositol) + CoA. The catalysed reaction is (5Z,8Z,11Z,14Z)-eicosatetraenoyl-CoA + 1-hexadecanoyl-sn-glycero-3-phosphocholine = 1-hexadecanoyl-2-(5Z,8Z,11Z,14Z-eicosatetraenoyl)-sn-glycero-3-phosphocholine + CoA. It carries out the reaction a 1-acyl-sn-glycero-3-phospho-(1D-myo-inositol) + an acyl-CoA = a 1,2-diacyl-sn-glycero-3-phospho-(1D-myo-inositol) + CoA. It catalyses the reaction 1-octadecanoyl-sn-glycero-3-phospho-(1D-myo-inositol) + (5Z,8Z,11Z,14Z)-eicosatetraenoyl-CoA = 1-octadecanoyl-2-(5Z,8Z,11Z,14Z-eicosatetraenoyl)-sn-glycero-3-phospho-(1D-myo-inositol) + CoA. It functions in the pathway lipid metabolism; phospholipid metabolism. Its activity is regulated as follows. Activity is inhibited by thimerosal. In terms of biological role, acyltransferase which catalyzes the transfer of an acyl group from an acyl-CoA to a lysophosphatidylinositol (1-acylglycerophosphatidylinositol or LPI) leading to the production of a phosphatidylinositol (1,2-diacyl-sn-glycero-3-phosphoinositol or PI) and participates in the reacylation step of the phospholipid remodeling pathway also known as the Lands cycle. Prefers arachidonoyl-CoA as the acyl donor, thus contributing to the regulation of free levels arachidonic acid in cell. In liver, participates in the regulation of triglyceride metabolism through the phosphatidylinositol acyl-chain remodeling regulation. In Homo sapiens (Human), this protein is Membrane-bound acylglycerophosphatidylinositol O-acyltransferase MBOAT7.